Reading from the N-terminus, the 525-residue chain is Sensory neuron membrane protein 1 (525 aa).

Residues 1-11 (MLLPKELKYAA) are Cytoplasmic-facing. A helical transmembrane segment spans residues 12–32 (IAGGVAVFGLIFGWVLFPVIL). At 33-456 (KGQLKKEMAL…LKHQLFIPKR (424 aa)) the chain is on the extracellular side. Residues asparagine 67, asparagine 229, and asparagine 324 are each glycosylated (N-linked (GlcNAc...) asparagine). 3 cysteine pairs are disulfide-bonded: cysteine 268-cysteine 333, cysteine 297-cysteine 352, and cysteine 335-cysteine 341. Asparagine 440 carries N-linked (GlcNAc...) asparagine glycosylation. A helical transmembrane segment spans residues 457-477 (VVGVLRWWMVSFGSLGADIGI). Over 478–525 (VYHFRDHIMRLAVSGDTKVSKVTPEEDPEQKDISVIGPPAQEPAKINI) the chain is Cytoplasmic. The interval 497 to 525 (SKVTPEEDPEQKDISVIGPPAQEPAKINI) is disordered.

Belongs to the CD36 family.

Its subcellular location is the cell membrane. Its function is as follows. Plays an olfactory role that is not restricted to pheromone sensitivity. This chain is Sensory neuron membrane protein 1, found in Mamestra brassicae (Cabbage moth).